A 205-amino-acid chain; its full sequence is uncharacterized protein (205 aa).

A coiled-coil region spans residues 10 to 75 (QDLLSAVDQQ…AANLMTVMTD (66 aa)). The interval 111-138 (PLSNTNNEQTSPPASGKTSETPKKNPTN) is disordered. The span at 112 to 138 (LSNTNNEQTSPPASGKTSETPKKNPTN) shows a compositional bias: polar residues.

The protein belongs to the asfivirus K205R family.

The protein localises to the host cytoplasm. Its function is as follows. Induces host endoplasmic reticulum stress and consequently activates autophagy and NF-kappa-B signaling pathway. In turn, may induce autophagy-mediated STING1 degradation and innate immune evasion. This is an uncharacterized protein from Ornithodoros (relapsing fever ticks).